The sequence spans 131 residues: uncharacterized protein (131 aa).

This is an uncharacterized protein from Rickettsia conorii (strain ATCC VR-613 / Malish 7).